The chain runs to 499 residues: Glycerol kinase (499 aa).

Residue Thr-13 participates in ADP binding. Positions 13, 14, and 15 each coordinate ATP. Residue Thr-13 participates in sn-glycerol 3-phosphate binding. Arg-17 is an ADP binding site. Sn-glycerol 3-phosphate is bound by residues Arg-83, Glu-84, Tyr-135, and Asp-245. Glycerol contacts are provided by Arg-83, Glu-84, Tyr-135, Asp-245, and Gln-246. ADP-binding residues include Thr-267 and Gly-310. Thr-267, Gly-310, Gln-314, and Gly-411 together coordinate ATP. Positions 411 and 415 each coordinate ADP.

This sequence belongs to the FGGY kinase family.

It carries out the reaction glycerol + ATP = sn-glycerol 3-phosphate + ADP + H(+). The protein operates within polyol metabolism; glycerol degradation via glycerol kinase pathway; sn-glycerol 3-phosphate from glycerol: step 1/1. With respect to regulation, inhibited by fructose 1,6-bisphosphate (FBP). Functionally, key enzyme in the regulation of glycerol uptake and metabolism. Catalyzes the phosphorylation of glycerol to yield sn-glycerol 3-phosphate. The chain is Glycerol kinase from Xanthomonas campestris pv. campestris (strain 8004).